The following is a 33-amino-acid chain: Photosystem II reaction center protein Psb30 (33 aa).

A helical transmembrane segment spans residues 5 to 25 (IVAQLTVLALIVVSGPLVIAL).

This sequence belongs to the Psb30/Ycf12 family. As to quaternary structure, PSII is composed of 1 copy each of membrane proteins PsbA, PsbB, PsbC, PsbD, PsbE, PsbF, PsbH, PsbI, PsbJ, PsbK, PsbL, PsbM, PsbT, PsbX, PsbY, PsbZ, Psb30/Ycf12, peripheral proteins of the oxygen-evolving complex and a large number of cofactors. It forms dimeric complexes.

It is found in the plastid. The protein localises to the chloroplast thylakoid membrane. Its function is as follows. A core subunit of photosystem II (PSII), probably helps stabilize the reaction center. In Angiopteris evecta (Mule's foot fern), this protein is Photosystem II reaction center protein Psb30.